Consider the following 55-residue polypeptide: ATP synthase F(0) complex subunit 8 (55 aa).

A helical transmembrane segment spans residues 8–24 (PWFSIMVMTWLTLALLI). Positions 35-55 (NPPSKKPSLITKPTPWAWPWT) are disordered.

Belongs to the ATPase protein 8 family. Component of the ATP synthase complex composed at least of ATP5F1A/subunit alpha, ATP5F1B/subunit beta, ATP5MC1/subunit c (homooctomer), MT-ATP6/subunit a, MT-ATP8/subunit 8, ATP5ME/subunit e, ATP5MF/subunit f, ATP5MG/subunit g, ATP5MK/subunit k, ATP5MJ/subunit j, ATP5F1C/subunit gamma, ATP5F1D/subunit delta, ATP5F1E/subunit epsilon, ATP5PF/subunit F6, ATP5PB/subunit b, ATP5PD/subunit d, ATP5PO/subunit OSCP. ATP synthase complex consists of a soluble F(1) head domain (subunits alpha(3) and beta(3)) - the catalytic core - and a membrane F(0) domain - the membrane proton channel (subunits c, a, 8, e, f, g, k and j). These two domains are linked by a central stalk (subunits gamma, delta, and epsilon) rotating inside the F1 region and a stationary peripheral stalk (subunits F6, b, d, and OSCP).

Its subcellular location is the mitochondrion membrane. Its function is as follows. Subunit 8, of the mitochondrial membrane ATP synthase complex (F(1)F(0) ATP synthase or Complex V) that produces ATP from ADP in the presence of a proton gradient across the membrane which is generated by electron transport complexes of the respiratory chain. ATP synthase complex consist of a soluble F(1) head domain - the catalytic core - and a membrane F(1) domain - the membrane proton channel. These two domains are linked by a central stalk rotating inside the F(1) region and a stationary peripheral stalk. During catalysis, ATP synthesis in the catalytic domain of F(1) is coupled via a rotary mechanism of the central stalk subunits to proton translocation. In vivo, can only synthesize ATP although its ATP hydrolase activity can be activated artificially in vitro. Part of the complex F(0) domain. This chain is ATP synthase F(0) complex subunit 8, found in Anas platyrhynchos (Mallard).